We begin with the raw amino-acid sequence, 387 residues long: Aminodeoxyfutalosine deaminase (387 aa).

Basic and acidic residues predominate over residues 1 to 10; sequence MRPAYDDPRT. The segment at 1–37 is disordered; it reads MRPAYDDPRTTDQPITRARPPPRAARGRRLGEEPLTE. The Zn(2+) site is built by H61 and H63. R116, D183, and G217 together coordinate substrate. H244 contacts Zn(2+). The active-site Proton donor is E247. D325 lines the Zn(2+) pocket.

It belongs to the metallo-dependent hydrolases superfamily. Adenosine and AMP deaminases family. It depends on Zn(2+) as a cofactor.

The enzyme catalyses 6-amino-6-deoxyfutalosine + H2O + H(+) = futalosine + NH4(+). Its pathway is quinol/quinone metabolism; menaquinone biosynthesis. Its function is as follows. Catalyzes the deamination of aminodeoxyfutalosine (AFL) into futalosine (FL), a step in the biosynthesis of menaquinone (MK, vitamin K2). The sequence is that of Aminodeoxyfutalosine deaminase from Streptomyces coelicolor (strain ATCC BAA-471 / A3(2) / M145).